A 319-amino-acid polypeptide reads, in one-letter code: Probable cell division protein WhiA (319 aa).

The H-T-H motif DNA-binding region spans Ser277–Lys310.

It belongs to the WhiA family.

In terms of biological role, involved in cell division and chromosome segregation. This chain is Probable cell division protein WhiA, found in Tropheryma whipplei (strain Twist) (Whipple's bacillus).